The following is a 276-amino-acid chain: Mediator of RNA polymerase II transcription subunit 7 (276 aa).

Composition is skewed to basic and acidic residues over residues 1-11 and 234-263; these read MADADAQRQAE and FGRE…RDAQ. 2 disordered regions span residues 1–27 and 234–276; these read MADA…PPPF and FGRE…MLSQ.

It belongs to the Mediator complex subunit 7 family. In terms of assembly, component of the Mediator complex.

The protein localises to the nucleus. Functionally, component of the Mediator complex, a coactivator involved in the regulated transcription of nearly all RNA polymerase II-dependent genes. Mediator functions as a bridge to convey information from gene-specific regulatory proteins to the basal RNA polymerase II transcription machinery. Mediator is recruited to promoters by direct interactions with regulatory proteins and serves as a scaffold for the assembly of a functional preinitiation complex with RNA polymerase II and the general transcription factors. This is Mediator of RNA polymerase II transcription subunit 7 (MED7) from Phaeosphaeria nodorum (strain SN15 / ATCC MYA-4574 / FGSC 10173) (Glume blotch fungus).